The sequence spans 402 residues: Coiled-coil domain-containing protein 188 (402 aa).

Disordered regions lie at residues 1-30, 50-74, and 108-131; these read MEGLKTLGPCGHPHPQCPPTPASSSHGGGL, HSVQSQRPFPVPGAGGSGPTVEGEA, and HPGSNQGAPRQGGSIGSGTRPCPC. A coiled-coil region spans residues 154–189; it reads GLLGSAEQSFLQLEQENHSLKRQNQELREQLGALLG. Residues 347-363 traverse the membrane as a helical segment; sequence LLLGALLVWTAAYVYVV.

The protein resides in the membrane. This is Coiled-coil domain-containing protein 188 from Homo sapiens (Human).